We begin with the raw amino-acid sequence, 576 residues long: 5'-nucleotidase (576 aa).

The signal sequence occupies residues 1–28; the sequence is MRPAAAKVPKWLLLALSALLPQWPAASA. The Zn(2+) site is built by Asp-38 and His-40. Cys-53 and Cys-59 are oxidised to a cystine. Asn-55 is a glycosylation site (N-linked (GlcNAc...) asparagine). Positions 87, 119, 222, and 245 each coordinate Zn(2+). N-linked (GlcNAc...) asparagine glycosylation is found at Asn-313 and Asn-335. 2 disulfides stabilise this stretch: Cys-355–Cys-360 and Cys-367–Cys-389. Arg-356 is a binding site for AMP. Position 356 (Arg-356) interacts with IMP. AMP-binding residues include Asn-392 and Arg-397. Asn-392 and Arg-397 together coordinate IMP. Asn-405 carries an N-linked (GlcNAc...) asparagine glycan. Phe-419 is a binding site for AMP. Phe-419 contacts IMP. The cysteines at positions 478 and 481 are disulfide-linked. The AMP site is built by Tyr-502 and Asp-508. IMP is bound by residues Tyr-502 and Asp-508. Residue Ser-551 is the site of GPI-anchor amidated serine attachment. Positions 552-576 are cleaved as a propeptide — removed in mature form; it reads AASHYQGSFPLVILSFWAMILILYQ.

Belongs to the 5'-nucleotidase family. Homodimer. Requires Zn(2+) as cofactor. In terms of tissue distribution, expressed at high levels in the placenta, kidney, lung and stomach and at lower levels in the thymus, spleen, skeletal muscle and esophagus.

It localises to the cell membrane. The enzyme catalyses a ribonucleoside 5'-phosphate + H2O = a ribonucleoside + phosphate. The catalysed reaction is a 2'-deoxyribonucleoside 5'-phosphate + H2O = a 2'-deoxyribonucleoside + phosphate. It catalyses the reaction dTMP + H2O = thymidine + phosphate. It carries out the reaction CMP + H2O = cytidine + phosphate. The enzyme catalyses IMP + H2O = inosine + phosphate. The catalysed reaction is AMP + H2O = adenosine + phosphate. It catalyses the reaction GMP + H2O = guanosine + phosphate. It carries out the reaction UMP + H2O = uridine + phosphate. The enzyme catalyses dAMP + H2O = 2'-deoxyadenosine + phosphate. The catalysed reaction is dCMP + H2O = 2'-deoxycytidine + phosphate. Functionally, catalyzes the hydrolysis of nucleotide monophosphates, releasing inorganic phosphate and the corresponding nucleoside. Hydrolyzes IMP. Shows a preference for ribonucleotide monophosphates over their equivalent deoxyribose forms. Although AMP is the preferred substrate can also hydrolyze UMP, GMP, CMP, dAMP, dCMP, dTMP, NAD and NMN. The polypeptide is 5'-nucleotidase (Nt5e) (Mus musculus (Mouse)).